The chain runs to 601 residues: Glutathione-regulated potassium-efflux system protein KefB (601 aa).

The next 13 membrane-spanning stretches (helical) occupy residues 4-24, 29-49, 55-75, 87-107, 111-131, 152-172, 177-197, 207-227, 230-250, 262-282, 284-304, 324-344, and 356-376; these read ADLLTAGVLFLFAAVAAVPLA, IGAVLGYLLAGIAIGPWGLGF, EILHFSELGVVFLMFIIGLEL, IFGVGAAQVLLSAAVLAGLLM, FLWQAAVVGGIGLAMSSTAMA, VLLFQDLAVIPALALVPLLAG, HFDWFKVAMKVLAFAVMLIGG, FIAASGVREVFTAATLLLVLS, LFMDALGLSMALGTFIAGVLL, AIDPFKGLLLGLFFISVGMSL, LGVLYTHLLWVAASVVILVVI, MQFASVLSQGGEFAFVLFSTA, and ALLLVTVTLSMMTTPLLMKGI. The RCK N-terminal domain maps to 400-519; that stretch reads KPQVIVVGFG…AGVTQFSRET (120 aa).

Belongs to the monovalent cation:proton antiporter 2 (CPA2) transporter (TC 2.A.37) family. KefB subfamily. In terms of assembly, interacts with the regulatory subunit KefG.

The protein localises to the cell inner membrane. In terms of biological role, pore-forming subunit of a potassium efflux system that confers protection against electrophiles. Catalyzes K(+)/H(+) antiport. This is Glutathione-regulated potassium-efflux system protein KefB from Salmonella dublin (strain CT_02021853).